Consider the following 520-residue polypeptide: ATP synthase subunit alpha (520 aa).

169–176 is an ATP binding site; the sequence is GDRKTGKT.

It belongs to the ATPase alpha/beta chains family. As to quaternary structure, F-type ATPases have 2 components, CF(1) - the catalytic core - and CF(0) - the membrane proton channel. CF(1) has five subunits: alpha(3), beta(3), gamma(1), delta(1), epsilon(1). CF(0) has three main subunits: a(1), b(2) and c(9-12). The alpha and beta chains form an alternating ring which encloses part of the gamma chain. CF(1) is attached to CF(0) by a central stalk formed by the gamma and epsilon chains, while a peripheral stalk is formed by the delta and b chains.

The protein resides in the cell membrane. The enzyme catalyses ATP + H2O + 4 H(+)(in) = ADP + phosphate + 5 H(+)(out). Its function is as follows. Produces ATP from ADP in the presence of a proton gradient across the membrane. The alpha chain is a regulatory subunit. The chain is ATP synthase subunit alpha from Oenococcus oeni (strain ATCC BAA-331 / PSU-1).